We begin with the raw amino-acid sequence, 796 residues long: ATP-dependent DNA helicase PIF6 (796 aa).

Residues R197–G230 form a disordered region. G255–T262 provides a ligand contact to ATP. A DNA-binding region spans residues Q636–F655. Disordered stretches follow at residues K692 to H719 and T762 to D796.

This sequence belongs to the helicase family. PIF1 subfamily. Monomer. It depends on Mg(2+) as a cofactor.

It is found in the nucleus. It catalyses the reaction Couples ATP hydrolysis with the unwinding of duplex DNA at the replication fork by translocating in the 5'-3' direction. This creates two antiparallel DNA single strands (ssDNA). The leading ssDNA polymer is the template for DNA polymerase III holoenzyme which synthesizes a continuous strand.. The enzyme catalyses ATP + H2O = ADP + phosphate + H(+). Its function is as follows. DNA-dependent ATPase and 5'-3' DNA helicase required for the maintenance of genome stability. This is ATP-dependent DNA helicase PIF6 from Trypanosoma brucei brucei (strain 927/4 GUTat10.1).